Here is a 346-residue protein sequence, read N- to C-terminus: Phosphoribosylformylglycinamidine cyclo-ligase (346 aa).

The protein belongs to the AIR synthase family.

It localises to the cytoplasm. The catalysed reaction is 2-formamido-N(1)-(5-O-phospho-beta-D-ribosyl)acetamidine + ATP = 5-amino-1-(5-phospho-beta-D-ribosyl)imidazole + ADP + phosphate + H(+). It functions in the pathway purine metabolism; IMP biosynthesis via de novo pathway; 5-amino-1-(5-phospho-D-ribosyl)imidazole from N(2)-formyl-N(1)-(5-phospho-D-ribosyl)glycinamide: step 2/2. The polypeptide is Phosphoribosylformylglycinamidine cyclo-ligase (Bacillus cereus (strain ZK / E33L)).